The sequence spans 668 residues: Pentatricopeptide repeat-containing protein CRP1, chloroplastic (668 aa).

Residues 1 to 64 constitute a chloroplast transit peptide; the sequence is MPASLLPPTF…SASLTSPSPP (64 aa). PPR repeat units follow at residues 154-188, 189-226, 227-261, 262-297, 298-332, 333-367, 368-402, 403-437, 438-472, 473-507, 508-542, 543-577, 578-612, and 613-647; these read SPLL…DFLP, DLAS…RLEP, DAPL…GLTP, RSNA…EIKP, RTRA…GVAP, DEAT…GVKP, SSYV…GVRP, DRHF…GIEP, DVVT…NCPP, GTTT…GLVP, NIIT…GLKP, SPTM…GLEV, SILV…GLRP, and DVIT…GCAP.

It belongs to the PPR family. P subfamily. In terms of assembly, component of a multisubunit complex.

It is found in the plastid. Its subcellular location is the chloroplast stroma. Its function is as follows. Required for the translation of the chloroplast petA and petD mRNAs. Required for the processing of the petD mRNA from a polycistronic precursor. Binds with high affinity to the 5'-UTR of the chloroplastic petA transcript. Activates psaC and petA translation by binding their 5'-UTRs. This is Pentatricopeptide repeat-containing protein CRP1, chloroplastic from Zea mays (Maize).